The chain runs to 1700 residues: Rho guanine nucleotide exchange factor 28 (1700 aa).

Residues 288-335 (TERATMPSGAAETEEEVRNLESGRSPSEEEEDGQLVKSQADGPSEQED) form a disordered region. 3 positions are modified to phosphoserine: Ser-312, Ser-314, and Ser-478. The segment at 483–525 (VADSEEEGRSEPPICYAVGSQSSPRTGLPGGDELDSFDANTEP) is disordered. Ser-623 is modified (phosphoserine). Residues 651-698 (RHQFVPGTFSGVLQCSGCDKTLLGKESLQCANCKANTHKGCKDTVPPC) form a Phorbol-ester/DAG-type zinc finger. Positions 709-720 (NKPQTILGSSSV) are enriched in polar residues. Disordered regions lie at residues 709–761 (NKPQ…VPGT) and 774–799 (ESEG…GSSP). A compositionally biased stretch (low complexity) spans 728-737 (LSLHPSPSMP). A compositionally biased stretch (polar residues) spans 774-783 (ESEGDSNSWR). One can recognise a DH domain in the interval 848–1043 (KRQDVIFELM…KDMIAAVDLK (196 aa)). A PH domain is found at 1085-1187 (ALLHDGLVYW…WMRRIQQAVE (103 aa)). The interval 1186-1207 (VESCPEEEGGRTSESDEERRKA) is disordered. Residues 1193-1207 (EGGRTSESDEERRKA) are compositionally biased toward basic and acidic residues. An interaction with PTK2/FAK1; required for regulation of axonal branching and synapse formation region spans residues 1294-1303 (DVSQPSEEGP). Residues 1369–1380 (IIQAIQNLTRLL) form a mediates cytoplasmic retention and interaction with YWHAH region. The segment at 1421–1700 (QEKSRYLEKH…DGAEENIVYL (280 aa)) is interaction with microtubules. Positions 1473 to 1522 (ERECQSQEELLLRHRSELDHQLQEYQQNLERLREGQRMVERERQRMRDQQ) form a coiled coil. An RNA-binding region spans residues 1493-1524 (QLQEYQQNLERLREGQRMVERERQRMRDQQGL). Position 1535 is a phosphoserine (Ser-1535). Positions 1563-1576 (FLNDAFTHMSLNTS) are mediates cytoplasmic retention and interaction with MAPK8IP1. Residues 1574-1598 (NTSNKPNPSGAPWDAHPPGGSHLDL) are disordered. Position 1604 is a phosphoserine (Ser-1604). The tract at residues 1612–1700 (VSQPSDVNSE…DGAEENIVYL (89 aa)) is disordered. A compositionally biased stretch (polar residues) spans 1613-1623 (SQPSDVNSELW). Residues 1633–1642 (ARQESIKDSC) are compositionally biased toward basic and acidic residues. The segment covering 1647–1672 (DLNSFQTESPDPQDSNQRGPQPQTLI) has biased composition (polar residues).

As to quaternary structure, homooligomer; forms cytoplasmic aggregates. Forms a complex with MAPK8 and MAPK8IP1. Interacts with RHOA. Interacts with microtubules. Interacts with YWHAE and YWHAH. Interacts with PTK2/FAK1. Interacts with NEFL. Interacts with CTNND2; prevents interaction with RHOA. Phosphorylated on tyrosine upon stimulation of cells by laminin.

It localises to the cytoplasm. It is found in the cell membrane. Functionally, functions as a RHOA-specific guanine nucleotide exchange factor regulating signaling pathways downstream of integrins and growth factor receptors. Functions in axonal branching, synapse formation and dendritic morphogenesis. Also functions in focal adhesion formation, cell motility and B-lymphocytes activation. May regulate NEFL expression and aggregation and play a role in apoptosis. The chain is Rho guanine nucleotide exchange factor 28 (Arhgef28) from Rattus norvegicus (Rat).